Reading from the N-terminus, the 498-residue chain is Transcription factor kayak (498 aa).

Positions 108–127 (ASLGQGSESEDSNASYNDTQ) are enriched in polar residues. Disordered regions lie at residues 108-144 (ASLG…HTDS) and 177-234 (GSAS…KRRV). Low complexity-rich tracts occupy residues 135–144 (TDTSSAHTDS) and 177–191 (GSAS…TSNT). A bZIP domain is found at 212–275 (EQKRAVRRER…KQLEYLLATH (64 aa)). The basic motif stretch occupies residues 214 to 233 (KRAVRRERNKQAAARCRKRR). The segment at 240–247 (LTEEVEQL) is leucine-zipper. Residues 304 to 325 (AGSSGSGASSHHNHNSNDSSNG) are compositionally biased toward low complexity. Disordered stretches follow at residues 304–345 (AGSS…SPLD) and 465–498 (TPVS…LVSL). Residues 333 to 343 (TLNSTGRSNSP) show a composition bias toward polar residues. Phosphoserine is present on S342.

It belongs to the bZIP family. Fos subfamily. Homodimer. Heterodimer with Jra. The kay-Jra heterodimer binds more stably to the AP-1 site than either of the two proteins alone.

The protein localises to the nucleus. Developmentally regulated transcription factor AP-1 binds and recognizes the enhancer DNA sequence: 5'-TGA[CG]TCA-3'. May play a role in the function or determination of a particular subset of cells in the developing embryo. It is able to carry out its function either independently of or in conjunction with Jra. This chain is Transcription factor kayak, found in Drosophila simulans (Fruit fly).